An 871-amino-acid chain; its full sequence is Alanine--tRNA ligase (871 aa).

Positions 561, 565, 662, and 666 each coordinate Zn(2+).

The protein belongs to the class-II aminoacyl-tRNA synthetase family. The cofactor is Zn(2+).

The protein localises to the cytoplasm. The catalysed reaction is tRNA(Ala) + L-alanine + ATP = L-alanyl-tRNA(Ala) + AMP + diphosphate. Its function is as follows. Catalyzes the attachment of alanine to tRNA(Ala) in a two-step reaction: alanine is first activated by ATP to form Ala-AMP and then transferred to the acceptor end of tRNA(Ala). Also edits incorrectly charged Ser-tRNA(Ala) and Gly-tRNA(Ala) via its editing domain. The protein is Alanine--tRNA ligase of Dechloromonas aromatica (strain RCB).